The following is a 386-amino-acid chain: Succinate--CoA ligase [ADP-forming] subunit beta (386 aa).

In terms of domain architecture, ATP-grasp spans 9-244 (KEVLRKYGVV…LDEEDADEIE (236 aa)). ATP is bound by residues K46, 53–55 (GRG), E99, A102, and E107. Mg(2+) contacts are provided by N199 and D213. Substrate contacts are provided by residues N264 and 321 to 323 (GIM).

The protein belongs to the succinate/malate CoA ligase beta subunit family. In terms of assembly, heterotetramer of two alpha and two beta subunits. Mg(2+) serves as cofactor.

It catalyses the reaction succinate + ATP + CoA = succinyl-CoA + ADP + phosphate. The catalysed reaction is GTP + succinate + CoA = succinyl-CoA + GDP + phosphate. Its pathway is carbohydrate metabolism; tricarboxylic acid cycle; succinate from succinyl-CoA (ligase route): step 1/1. Functionally, succinyl-CoA synthetase functions in the citric acid cycle (TCA), coupling the hydrolysis of succinyl-CoA to the synthesis of either ATP or GTP and thus represents the only step of substrate-level phosphorylation in the TCA. The beta subunit provides nucleotide specificity of the enzyme and binds the substrate succinate, while the binding sites for coenzyme A and phosphate are found in the alpha subunit. This Azoarcus sp. (strain BH72) protein is Succinate--CoA ligase [ADP-forming] subunit beta.